We begin with the raw amino-acid sequence, 375 residues long: 23S rRNA (uracil(747)-C(5))-methyltransferase RlmC (375 aa).

Positions 3, 11, 14, and 87 each coordinate [4Fe-4S] cluster. S-adenosyl-L-methionine-binding residues include glutamine 212, phenylalanine 241, glutamate 262, and asparagine 307. The active-site Nucleophile is cysteine 334.

The protein belongs to the class I-like SAM-binding methyltransferase superfamily. RNA M5U methyltransferase family. RlmC subfamily.

It catalyses the reaction uridine(747) in 23S rRNA + S-adenosyl-L-methionine = 5-methyluridine(747) in 23S rRNA + S-adenosyl-L-homocysteine + H(+). In terms of biological role, catalyzes the formation of 5-methyl-uridine at position 747 (m5U747) in 23S rRNA. The sequence is that of 23S rRNA (uracil(747)-C(5))-methyltransferase RlmC from Escherichia fergusonii (strain ATCC 35469 / DSM 13698 / CCUG 18766 / IAM 14443 / JCM 21226 / LMG 7866 / NBRC 102419 / NCTC 12128 / CDC 0568-73).